The chain runs to 335 residues: Phosphate acyltransferase (335 aa).

It belongs to the PlsX family. As to quaternary structure, homodimer. Probably interacts with PlsY.

The protein localises to the cytoplasm. It carries out the reaction a fatty acyl-[ACP] + phosphate = an acyl phosphate + holo-[ACP]. It participates in lipid metabolism; phospholipid metabolism. Catalyzes the reversible formation of acyl-phosphate (acyl-PO(4)) from acyl-[acyl-carrier-protein] (acyl-ACP). This enzyme utilizes acyl-ACP as fatty acyl donor, but not acyl-CoA. The chain is Phosphate acyltransferase from Brevibacillus brevis (strain 47 / JCM 6285 / NBRC 100599).